The primary structure comprises 712 residues: Semaphorin-1A (712 aa).

A signal peptide spans 1 to 20 (MVVKILVWSICLIALCHAWM). The region spanning 21 to 483 (PDSSSKLINH…GKDEIRLANL (463 aa)) is the Sema domain. Residues 21 to 601 (PDSSSKLINH…IGGCAVRQQL (581 aa)) lie on the Extracellular side of the membrane. Residues N42 and N69 are each glycosylated (N-linked (GlcNAc...) asparagine). 2 disulfide bridges follow: C95-C105 and C123-C132. N-linked (GlcNAc...) asparagine glycans are attached at residues N161 and N265. 4 disulfide bridges follow: C242/C357, C266/C316, C486/C503, and C495/C512. Residues 602-622 (VIYTAGTLHIVVVVVSIVGLF) traverse the membrane as a helical segment. Residues 623-712 (SWLYSGLSVF…TLQKIKKTYI (90 aa)) lie on the Cytoplasmic side of the membrane.

It belongs to the semaphorin family.

It localises to the membrane. Its function is as follows. Plays a role in growth cones guidance. The polypeptide is Semaphorin-1A (SEMA-1A) (Tribolium confusum (Confused flour beetle)).